Reading from the N-terminus, the 657-residue chain is Replication restart protein PriA (657 aa).

The Helicase ATP-binding domain maps to 143–309; sequence ITASTGARSF…LRGAVRRLPL (167 aa). 156–163 contacts ATP; the sequence is GVTGSGKT. The short motif at 252–255 is the DEAH box element; sequence DEEH. The Zn(2+) site is built by Cys366, Cys369, Cys375, Cys378, Cys393, Cys396, Cys406, and Cys409. The Helicase C-terminal domain maps to 390–570; that stretch reads AMQCHYCGRQ…PFVRLIRFVF (181 aa).

Belongs to the helicase family. PriA subfamily. In terms of assembly, component of the replication restart primosome. Zn(2+) is required as a cofactor.

The catalysed reaction is Couples ATP hydrolysis with the unwinding of duplex DNA by translocating in the 3'-5' direction.. It carries out the reaction ATP + H2O = ADP + phosphate + H(+). Initiates the restart of stalled replication forks, which reloads the replicative helicase on sites other than the origin of replication. Recognizes and binds to abandoned replication forks and remodels them to uncover a helicase loading site. Promotes assembly of the primosome at these replication forks. In Treponema pallidum (strain Nichols), this protein is Replication restart protein PriA.